The chain runs to 127 residues: Aspartate 1-decarboxylase (127 aa).

The active-site Schiff-base intermediate with substrate; via pyruvic acid is the Ser-25. Ser-25 carries the pyruvic acid (Ser) modification. Residue Thr-57 participates in substrate binding. Tyr-58 serves as the catalytic Proton donor. 73–75 contributes to the substrate binding site; sequence GAA.

Belongs to the PanD family. In terms of assembly, heterooctamer of four alpha and four beta subunits. The cofactor is pyruvate. In terms of processing, is synthesized initially as an inactive proenzyme, which is activated by self-cleavage at a specific serine bond to produce a beta-subunit with a hydroxyl group at its C-terminus and an alpha-subunit with a pyruvoyl group at its N-terminus.

Its subcellular location is the cytoplasm. It catalyses the reaction L-aspartate + H(+) = beta-alanine + CO2. Its pathway is cofactor biosynthesis; (R)-pantothenate biosynthesis; beta-alanine from L-aspartate: step 1/1. Functionally, catalyzes the pyruvoyl-dependent decarboxylation of aspartate to produce beta-alanine. The protein is Aspartate 1-decarboxylase of Neisseria gonorrhoeae (strain ATCC 700825 / FA 1090).